A 193-amino-acid polypeptide reads, in one-letter code: AP-3 complex subunit sigma-2 (193 aa).

Belongs to the adaptor complexes small subunit family. Adaptor protein complex 3 (AP-3) is a heterotetramer composed of two large adaptins (delta-type subunit AP3D1 and beta-type subunit AP3B1 or AP3B2), a medium adaptin (mu-type subunit AP3M1 or AP3M2) and a small adaptin (sigma-type subunit APS1 or AP3S2). Interacts with AGAP1. AP-3 associates with the BLOC-1 complex.

The protein localises to the golgi apparatus. It localises to the cytoplasmic vesicle membrane. In terms of biological role, part of the AP-3 complex, an adaptor-related complex which is not clathrin-associated. The complex is associated with the Golgi region as well as more peripheral structures. It facilitates the budding of vesicles from the Golgi membrane and may be directly involved in trafficking to lysosomes. In concert with the BLOC-1 complex, AP-3 is required to target cargos into vesicles assembled at cell bodies for delivery into neurites and nerve terminals. The sequence is that of AP-3 complex subunit sigma-2 (AP3S2) from Bos taurus (Bovine).